We begin with the raw amino-acid sequence, 134 residues long: Small ribosomal subunit protein uS12 (134 aa).

The tract at residues methionine 1–glycine 26 is disordered. Basic residues predominate over residues arginine 9–lysine 20. Aspartate 89 carries the post-translational modification 3-methylthioaspartic acid. The segment at aspartate 103–lysine 134 is disordered. The segment covering serine 113–lysine 123 has biased composition (basic residues). The span at alanine 124–lysine 134 shows a compositional bias: low complexity.

It belongs to the universal ribosomal protein uS12 family. As to quaternary structure, part of the 30S ribosomal subunit. Contacts proteins S8 and S17. May interact with IF1 in the 30S initiation complex.

In terms of biological role, with S4 and S5 plays an important role in translational accuracy. Functionally, interacts with and stabilizes bases of the 16S rRNA that are involved in tRNA selection in the A site and with the mRNA backbone. Located at the interface of the 30S and 50S subunits, it traverses the body of the 30S subunit contacting proteins on the other side and probably holding the rRNA structure together. The combined cluster of proteins S8, S12 and S17 appears to hold together the shoulder and platform of the 30S subunit. In Deinococcus geothermalis (strain DSM 11300 / CIP 105573 / AG-3a), this protein is Small ribosomal subunit protein uS12.